Here is a 247-residue protein sequence, read N- to C-terminus: Phosphonates import ATP-binding protein PhnC (247 aa).

The ABC transporter domain maps to 5–246; the sequence is IEVKNLVKNY…EDDIRKVYQT (242 aa). 37 to 44 contacts ATP; the sequence is GESGAGKS.

This sequence belongs to the ABC transporter superfamily. Phosphonates importer (TC 3.A.1.9.1) family. As to quaternary structure, the complex is composed of two ATP-binding proteins (PhnC), two transmembrane proteins (PhnE) and a solute-binding protein (PhnD).

Its subcellular location is the cell inner membrane. It catalyses the reaction phosphonate(out) + ATP + H2O = phosphonate(in) + ADP + phosphate + H(+). Part of the ABC transporter complex PhnCDE involved in phosphonates import. Responsible for energy coupling to the transport system. The sequence is that of Phosphonates import ATP-binding protein PhnC from Fusobacterium nucleatum subsp. nucleatum (strain ATCC 25586 / DSM 15643 / BCRC 10681 / CIP 101130 / JCM 8532 / KCTC 2640 / LMG 13131 / VPI 4355).